Here is a 270-residue protein sequence, read N- to C-terminus: Vegetative storage protein 1 (270 aa).

A signal peptide spans 1–17 (MKILSLSLLLLLAATVS). 2 N-linked (GlcNAc...) asparagine glycosylation sites follow: Asn115 and Asn215.

It belongs to the APS1/VSP family. As to expression, expressed in leaves and in gynoecia, especially in styles, the basal and distal ends of ovaries and in siliques.

Functionally, may function as somatic storage protein during early seedling development. The protein is Vegetative storage protein 1 (VSP1) of Arabidopsis thaliana (Mouse-ear cress).